The primary structure comprises 182 residues: uncharacterized protein (182 aa).

Positions methionine 1 to asparagine 23 are enriched in polar residues. The interval methionine 1–asparagine 33 is disordered.

Belongs to the peptidase M24 family.

This is an uncharacterized protein from Caenorhabditis elegans.